The following is a 486-amino-acid chain: Kynurenine 3-monooxygenase (486 aa).

Residues valine 19, 37–40, and alanine 57 each bind FAD; that span reads YEAR. Arginine 85 and tyrosine 99 together coordinate L-kynurenine. FAD is bound by residues arginine 111, leucine 136, threonine 172, aspartate 304, and 317–318; that span reads MN. L-kynurenine contacts are provided by asparagine 363 and tyrosine 398. The next 2 helical transmembrane spans lie at 385–404 and 425–445; these read FLHAIMPSTFIPLYTMVTFS and GLFFLGSLIAISSTYLLIHYM. The N-linked (GlcNAc...) asparagine glycan is linked to asparagine 465.

Belongs to the aromatic-ring hydroxylase family. KMO subfamily. FAD serves as cofactor. Highest levels in placenta and liver. Detectable in kidney.

Its subcellular location is the mitochondrion outer membrane. It carries out the reaction L-kynurenine + NADPH + O2 + H(+) = 3-hydroxy-L-kynurenine + NADP(+) + H2O. It participates in cofactor biosynthesis; NAD(+) biosynthesis; quinolinate from L-kynurenine: step 1/3. Its function is as follows. Catalyzes the hydroxylation of L-kynurenine (L-Kyn) to form 3-hydroxy-L-kynurenine (L-3OHKyn). Required for synthesis of quinolinic acid, a neurotoxic NMDA receptor antagonist and potential endogenous inhibitor of NMDA receptor signaling in axonal targeting, synaptogenesis and apoptosis during brain development. Quinolinic acid may also affect NMDA receptor signaling in pancreatic beta cells, osteoblasts, myocardial cells, and the gastrointestinal tract. The protein is Kynurenine 3-monooxygenase of Homo sapiens (Human).